A 603-amino-acid chain; its full sequence is Geraniol synthase Tps-5073G30, chloroplastic (603 aa).

A chloroplast-targeting transit peptide spans 1–35 (MCSISQKVVIGLNKAAANNNLQNLDRRGFKTRCVS). Residues Arg319, Asp356, Asp360, Arg497, and Asp500 each coordinate (2E)-geranyl diphosphate. Residues Asp356 and Asp360 each contribute to the Mg(2+) site. The short motif at 356 to 360 (DDVYD) is the DDXXD motif element. The Mg(2+) site is built by Asp500, Thr504, and Glu508.

This sequence belongs to the terpene synthase family. Tpsb subfamily. As to quaternary structure, monomer. Mg(2+) is required as a cofactor. Mn(2+) serves as cofactor.

The protein localises to the plastid. It is found in the chloroplast. It catalyses the reaction (2E)-geranyl diphosphate + H2O = (2E)-geraniol + diphosphate. It functions in the pathway secondary metabolite biosynthesis; terpenoid biosynthesis. Its function is as follows. Monoterpene synthase (mono-TPS) involved in the biosynthesis of monoterpenes natural products. Catalyzes the conversion of (2E)-geranyl diphosphate (GPP) into geraniol. The sequence is that of Geraniol synthase Tps-5073G30, chloroplastic from Perilla frutescens (Beefsteak mint).